Reading from the N-terminus, the 256-residue chain is Pimeloyl-[acyl-carrier protein] methyl ester esterase (256 aa).

The AB hydrolase-1 domain maps to 15–242 (HLVLLHGWGL…AAHAPFISHP (228 aa)). Substrate-binding positions include Trp22, 82 to 83 (SL), and 143 to 147 (FLALQ). Ser82 serves as the catalytic Nucleophile. Residues Asp207 and His235 contribute to the active site. His235 provides a ligand contact to substrate.

This sequence belongs to the AB hydrolase superfamily. Carboxylesterase BioH family. In terms of assembly, monomer.

The protein resides in the cytoplasm. It catalyses the reaction 6-carboxyhexanoyl-[ACP] methyl ester + H2O = 6-carboxyhexanoyl-[ACP] + methanol + H(+). It functions in the pathway cofactor biosynthesis; biotin biosynthesis. Functionally, the physiological role of BioH is to remove the methyl group introduced by BioC when the pimeloyl moiety is complete. It allows to synthesize pimeloyl-ACP via the fatty acid synthetic pathway through the hydrolysis of the ester bonds of pimeloyl-ACP esters. The chain is Pimeloyl-[acyl-carrier protein] methyl ester esterase from Escherichia coli O8 (strain IAI1).